Consider the following 498-residue polypeptide: Glycerol kinase (498 aa).

An ADP-binding site is contributed by T12. Residues T12, T13, and S14 each coordinate ATP. T12 serves as a coordination point for sn-glycerol 3-phosphate. Position 16 (R16) interacts with ADP. Sn-glycerol 3-phosphate contacts are provided by R82, E83, Y134, and D244. R82, E83, Y134, D244, and Q245 together coordinate glycerol. Residues T266 and G310 each coordinate ADP. Residues T266, G310, Q314, and G411 each contribute to the ATP site. ADP is bound by residues G411 and N415.

This sequence belongs to the FGGY kinase family.

It catalyses the reaction glycerol + ATP = sn-glycerol 3-phosphate + ADP + H(+). Its pathway is polyol metabolism; glycerol degradation via glycerol kinase pathway; sn-glycerol 3-phosphate from glycerol: step 1/1. With respect to regulation, inhibited by fructose 1,6-bisphosphate (FBP). Key enzyme in the regulation of glycerol uptake and metabolism. Catalyzes the phosphorylation of glycerol to yield sn-glycerol 3-phosphate. The sequence is that of Glycerol kinase from Chloroflexus aggregans (strain MD-66 / DSM 9485).